Consider the following 230-residue polypeptide: PsbP-like protein 1, chloroplastic (230 aa).

Belongs to the PsbP family.

The protein localises to the plastid. It is found in the chloroplast thylakoid lumen. Its function is as follows. Required for efficient repair of photodamaged PSII, but not tightly associated with the complex. This chain is PsbP-like protein 1, chloroplastic (PPL1), found in Arabidopsis thaliana (Mouse-ear cress).